We begin with the raw amino-acid sequence, 231 residues long: Small ribosomal subunit protein uS2 (231 aa).

The tract at residues 1 to 23 is disordered; the sequence is MKVTNLSEKEERGGELTEAEKEE. Positions 7 to 23 are enriched in basic and acidic residues; the sequence is SEKEERGGELTEAEKEE.

Belongs to the universal ribosomal protein uS2 family.

In Saccharolobus solfataricus (strain ATCC 35092 / DSM 1617 / JCM 11322 / P2) (Sulfolobus solfataricus), this protein is Small ribosomal subunit protein uS2 (rps2).